We begin with the raw amino-acid sequence, 377 residues long: Glutamate 5-kinase (377 aa).

Lysine 18 contacts ATP. Positions 59, 146, and 158 each coordinate substrate. Residues 178-179 (SD) and 222-228 (TGGMATK) each bind ATP. The PUA domain maps to 286–363 (QGWVTVDAGA…DAIEAELGFT (78 aa)).

Belongs to the glutamate 5-kinase family.

The protein resides in the cytoplasm. It carries out the reaction L-glutamate + ATP = L-glutamyl 5-phosphate + ADP. The protein operates within amino-acid biosynthesis; L-proline biosynthesis; L-glutamate 5-semialdehyde from L-glutamate: step 1/2. Catalyzes the transfer of a phosphate group to glutamate to form L-glutamate 5-phosphate. The chain is Glutamate 5-kinase from Caulobacter vibrioides (strain ATCC 19089 / CIP 103742 / CB 15) (Caulobacter crescentus).